The primary structure comprises 377 residues: UPF0754 membrane protein GTNG_0550 (377 aa).

The next 2 membrane-spanning stretches (helical) occupy residues 7–27 (LLFM…IAIV) and 357–377 (YLGA…GLWL).

Belongs to the UPF0754 family.

It localises to the cell membrane. This is UPF0754 membrane protein GTNG_0550 from Geobacillus thermodenitrificans (strain NG80-2).